A 749-amino-acid chain; its full sequence is Polyribonucleotide nucleotidyltransferase (749 aa).

Mg(2+) is bound by residues Asp-487 and Asp-493. Residues 554-613 (PSTTTIKIDKDKIRDIIGPGGKIIKEICETSGAKIDISDDGTVSVYASDRDKLKVALDKI) enclose the KH domain. The S1 motif domain occupies 623–691 (GEIFNGTVVK…NKGKAKLTIK (69 aa)). The segment at 691-749 (KNADKDKSSNNTKPKTNVNNTNKDNSEPEQRRDSSKKRAWNEDNNAETAEVITERKYFN) is disordered. Positions 699-713 (SNNTKPKTNVNNTNK) are enriched in low complexity. A compositionally biased stretch (basic and acidic residues) spans 714–723 (DNSEPEQRRD).

It belongs to the polyribonucleotide nucleotidyltransferase family. The cofactor is Mg(2+).

The protein resides in the cytoplasm. The enzyme catalyses RNA(n+1) + phosphate = RNA(n) + a ribonucleoside 5'-diphosphate. Involved in mRNA degradation. Catalyzes the phosphorolysis of single-stranded polyribonucleotides processively in the 3'- to 5'-direction. The protein is Polyribonucleotide nucleotidyltransferase of Rickettsia conorii (strain ATCC VR-613 / Malish 7).